Here is a 454-residue protein sequence, read N- to C-terminus: tRNA modification GTPase MnmE (454 aa).

(6S)-5-formyl-5,6,7,8-tetrahydrofolate is bound by residues Arg26, Glu84, and Lys123. A TrmE-type G domain is found at 219-378 (GLQVVIAGKP…LVDAITAHAG (160 aa)). Asn229 serves as a coordination point for K(+). GTP contacts are provided by residues 229-234 (NAGKSS), 248-254 (TDIAGTT), and 273-276 (DTAG). Ser233 lines the Mg(2+) pocket. K(+)-binding residues include Thr248, Ile250, and Thr253. Thr254 provides a ligand contact to Mg(2+). A (6S)-5-formyl-5,6,7,8-tetrahydrofolate-binding site is contributed by Lys454.

This sequence belongs to the TRAFAC class TrmE-Era-EngA-EngB-Septin-like GTPase superfamily. TrmE GTPase family. Homodimer. Heterotetramer of two MnmE and two MnmG subunits. Requires K(+) as cofactor.

Its subcellular location is the cytoplasm. Its function is as follows. Exhibits a very high intrinsic GTPase hydrolysis rate. Involved in the addition of a carboxymethylaminomethyl (cmnm) group at the wobble position (U34) of certain tRNAs, forming tRNA-cmnm(5)s(2)U34. This Acinetobacter baumannii (strain ATCC 17978 / DSM 105126 / CIP 53.77 / LMG 1025 / NCDC KC755 / 5377) protein is tRNA modification GTPase MnmE.